Reading from the N-terminus, the 448-residue chain is Adenylosuccinate synthetase (448 aa).

GTP is bound by residues 22–28 (GDEGKGK) and 50–52 (GHT). Catalysis depends on Asp-23, which acts as the Proton acceptor. Residues Asp-23 and Gly-50 each contribute to the Mg(2+) site. Residues 23-26 (DEGK), 48-51 (NAGH), Thr-139, Arg-153, Gln-234, Thr-249, and Arg-321 each bind IMP. Residue His-51 is the Proton donor of the active site. 317–323 (SVTGRPR) contributes to the substrate binding site. Residues Arg-323, 349–351 (KLD), and 431–433 (STG) contribute to the GTP site.

This sequence belongs to the adenylosuccinate synthetase family. As to quaternary structure, homodimer. Mg(2+) is required as a cofactor.

It localises to the cytoplasm. The enzyme catalyses IMP + L-aspartate + GTP = N(6)-(1,2-dicarboxyethyl)-AMP + GDP + phosphate + 2 H(+). Its pathway is purine metabolism; AMP biosynthesis via de novo pathway; AMP from IMP: step 1/2. In terms of biological role, plays an important role in the de novo pathway of purine nucleotide biosynthesis. Catalyzes the first committed step in the biosynthesis of AMP from IMP. This is Adenylosuccinate synthetase from Paraburkholderia phytofirmans (strain DSM 17436 / LMG 22146 / PsJN) (Burkholderia phytofirmans).